Here is a 176-residue protein sequence, read N- to C-terminus: Late lactation protein A (176 aa).

Positions 1-18 (MRVLFLTISLSLFSIIHA) are cleaved as a signal peptide. Residues C78 and C171 are joined by a disulfide bond.

Belongs to the calycin superfamily. Lipocalin family. As to expression, mammary gland specific. Secreted in milk.

Its subcellular location is the secreted. In terms of biological role, probably serves a role in the transport of a small ligand released during the hydrolysis of milk fat. The polypeptide is Late lactation protein A (LLPA) (Notamacropus eugenii (Tammar wallaby)).